We begin with the raw amino-acid sequence, 494 residues long: Amidophosphoribosyltransferase (494 aa).

Residues Met-1–Glu-10 constitute a propeptide that is removed on maturation. The active-site Nucleophile is the Cys-11. The Glutamine amidotransferase type-2 domain occupies Cys-11–Lys-231. Mg(2+) contacts are provided by Ser-294, Asp-356, and Asp-357.

The protein in the C-terminal section; belongs to the purine/pyrimidine phosphoribosyltransferase family. Mg(2+) is required as a cofactor.

It carries out the reaction 5-phospho-beta-D-ribosylamine + L-glutamate + diphosphate = 5-phospho-alpha-D-ribose 1-diphosphate + L-glutamine + H2O. The protein operates within purine metabolism; IMP biosynthesis via de novo pathway; N(1)-(5-phospho-D-ribosyl)glycinamide from 5-phospho-alpha-D-ribose 1-diphosphate: step 1/2. Functionally, catalyzes the formation of phosphoribosylamine from phosphoribosylpyrophosphate (PRPP) and glutamine. The chain is Amidophosphoribosyltransferase from Staphylococcus aureus (strain MRSA252).